We begin with the raw amino-acid sequence, 355 residues long: Enhancer of mRNA-decapping protein 1 (355 aa).

3 disordered regions span residues 1-146 (MSSD…VDGM), 210-230 (MSQP…SQPM), and 301-330 (NSTA…KSSQ). The span at 39–49 (AQKQQLPNGEQ) shows a compositional bias: polar residues. Residues 57-67 (KQSRKRGSGRQ) show a composition bias toward basic residues. The span at 91–110 (SIPSGSAGSESAQKETSAGQ) shows a compositional bias: polar residues. Over residues 123–142 (VPAGGPAGKSSSEPASASSA) the composition is skewed to low complexity.

Belongs to the EDC family.

It localises to the cytoplasm. Its function is as follows. mRNA-binding protein which stimulates mRNA decapping. The polypeptide is Enhancer of mRNA-decapping protein 1 (EDC1) (Eremothecium gossypii (strain ATCC 10895 / CBS 109.51 / FGSC 9923 / NRRL Y-1056) (Yeast)).